A 248-amino-acid polypeptide reads, in one-letter code: Flagellar L-ring protein (248 aa).

A signal peptide spans 1–23 (MRHAFRHSVRTLGLLGLLPVLSA). Cys24 is lipidated: N-palmitoyl cysteine. Cys24 is lipidated: S-diacylglycerol cysteine.

Belongs to the FlgH family. As to quaternary structure, the basal body constitutes a major portion of the flagellar organelle and consists of four rings (L,P,S, and M) mounted on a central rod.

It is found in the cell outer membrane. The protein resides in the bacterial flagellum basal body. Functionally, assembles around the rod to form the L-ring and probably protects the motor/basal body from shearing forces during rotation. The protein is Flagellar L-ring protein of Gluconobacter oxydans (strain 621H) (Gluconobacter suboxydans).